We begin with the raw amino-acid sequence, 490 residues long: Probable cytosol aminopeptidase (490 aa).

Positions 257 and 262 each coordinate Mn(2+). Residue Lys269 is part of the active site. Residues Asp281, Asp341, and Glu343 each coordinate Mn(2+). Residue Arg345 is part of the active site.

This sequence belongs to the peptidase M17 family. Mn(2+) is required as a cofactor.

Its subcellular location is the cytoplasm. It catalyses the reaction Release of an N-terminal amino acid, Xaa-|-Yaa-, in which Xaa is preferably Leu, but may be other amino acids including Pro although not Arg or Lys, and Yaa may be Pro. Amino acid amides and methyl esters are also readily hydrolyzed, but rates on arylamides are exceedingly low.. The enzyme catalyses Release of an N-terminal amino acid, preferentially leucine, but not glutamic or aspartic acids.. Functionally, presumably involved in the processing and regular turnover of intracellular proteins. Catalyzes the removal of unsubstituted N-terminal amino acids from various peptides. This Prochlorococcus marinus (strain MIT 9312) protein is Probable cytosol aminopeptidase.